The sequence spans 91 residues: Acylphosphatase (91 aa).

The Acylphosphatase-like domain occupies 3-90 (QYRIIVDGRV…EGHHRFSIVY (88 aa)). Active-site residues include arginine 18 and asparagine 36.

Belongs to the acylphosphatase family.

It catalyses the reaction an acyl phosphate + H2O = a carboxylate + phosphate + H(+). The protein is Acylphosphatase (acyP) of Bacillus subtilis (strain 168).